We begin with the raw amino-acid sequence, 136 residues long: Protein PsiE (136 aa).

4 helical membrane-spanning segments follow: residues 15-35 (ILQT…VVFL), 55-75 (YELV…ALIV), 82-102 (FHFP…RLII), and 108-128 (PLDV…LWLC).

The protein belongs to the PsiE family.

It localises to the cell inner membrane. This chain is Protein PsiE, found in Escherichia coli (strain SE11).